A 255-amino-acid polypeptide reads, in one-letter code: Hydroxyacylglutathione hydrolase (255 aa).

Zn(2+) contacts are provided by H56, H58, D60, H61, H114, D133, and H171.

This sequence belongs to the metallo-beta-lactamase superfamily. Glyoxalase II family. In terms of assembly, monomer. Requires Zn(2+) as cofactor.

It catalyses the reaction an S-(2-hydroxyacyl)glutathione + H2O = a 2-hydroxy carboxylate + glutathione + H(+). The protein operates within secondary metabolite metabolism; methylglyoxal degradation; (R)-lactate from methylglyoxal: step 2/2. Thiolesterase that catalyzes the hydrolysis of S-D-lactoyl-glutathione to form glutathione and D-lactic acid. This chain is Hydroxyacylglutathione hydrolase, found in Cereibacter sphaeroides (strain ATCC 17029 / ATH 2.4.9) (Rhodobacter sphaeroides).